The primary structure comprises 98 residues: NADH-ubiquinone oxidoreductase chain 4L (98 aa).

The next 3 membrane-spanning stretches (helical) occupy residues methionine 1 to methionine 21, serine 29 to leucine 49, and isoleucine 61 to valine 81.

The protein belongs to the complex I subunit 4L family. As to quaternary structure, core subunit of respiratory chain NADH dehydrogenase (Complex I) which is composed of 45 different subunits.

The protein localises to the mitochondrion inner membrane. The enzyme catalyses a ubiquinone + NADH + 5 H(+)(in) = a ubiquinol + NAD(+) + 4 H(+)(out). In terms of biological role, core subunit of the mitochondrial membrane respiratory chain NADH dehydrogenase (Complex I) which catalyzes electron transfer from NADH through the respiratory chain, using ubiquinone as an electron acceptor. Part of the enzyme membrane arm which is embedded in the lipid bilayer and involved in proton translocation. This chain is NADH-ubiquinone oxidoreductase chain 4L (MT-ND4L), found in Monachus monachus (Mediterranean monk seal).